The primary structure comprises 337 residues: Putative 2-aminoethylphosphonate-binding periplasmic protein (337 aa).

Residues 1–21 form the signal peptide; that stretch reads MKLSRLALLSVFALASAPSWA.

This sequence belongs to the bacterial solute-binding protein 1 family.

It localises to the periplasm. Probably part of the PhnSTUV complex (TC 3.A.1.11.5) involved in 2-aminoethylphosphonate import. The protein is Putative 2-aminoethylphosphonate-binding periplasmic protein (phnS) of Salmonella typhi.